We begin with the raw amino-acid sequence, 194 residues long: Putative manganese efflux pump MntP (194 aa).

6 consecutive transmembrane segments (helical) span residues 3–23 (PITI…AAIG), 37–57 (LYVA…GWLL), 65–85 (IAAF…IHMI), 112–132 (LAAT…SLAF), 137–157 (IGIV…FGVM), and 170–190 (AEIV…YEHL).

Belongs to the MntP (TC 9.B.29) family.

It is found in the cell inner membrane. Its function is as follows. Probably functions as a manganese efflux pump. The protein is Putative manganese efflux pump MntP of Xylella fastidiosa (strain M12).